The sequence spans 94 residues: ESAT-6-like protein EsxL (94 aa).

This sequence belongs to the WXG100 family. ESAT-6 subfamily. In terms of assembly, strongly interacts with EsxK to form a heterodimeric complex under reducing conditions. The complex is regulated by the redox state of EsxL.

Its subcellular location is the secreted. Functionally, induces apoptosis of host cells. Is immunogenic with highly specific seroreactivity towards TB patients' serum. This Mycobacterium tuberculosis (strain ATCC 25618 / H37Rv) protein is ESAT-6-like protein EsxL.